A 356-amino-acid polypeptide reads, in one-letter code: Replication factor C subunit 3 (356 aa).

Residue lysine 20 is modified to N6-acetyllysine. Serine 125 bears the Phosphoserine mark.

This sequence belongs to the activator 1 small subunits family. As to quaternary structure, subunit of the RFC complex, an heteropentameric complex consisting of a large subunit RFC1 and four small subunits RFC2, RFC3, RFC4 and RFC5; the RFC complex interacts with PCNA. Forms an heterotetrameric complex with RFC2, RFC4 and RFC5; this complex has ATPase activity but is not stimulated by PCNA. The heterotetramer of subunits RFC2, RFC3, RFC4 and RFC5 interacts with RAD17. Interacts with CNTD1; this interaction facilitates crossover formation.

The protein resides in the nucleus. In terms of biological role, subunit of the replication factor C (RFC) complex which acts during elongation of primed DNA templates by DNA polymerases delta and epsilon, and is necessary for ATP-dependent loading of proliferating cell nuclear antigen (PCNA) onto primed DNA. The chain is Replication factor C subunit 3 (Rfc3) from Mus musculus (Mouse).